Reading from the N-terminus, the 136-residue chain is MAKSDVKGVNLGMGTGRRKSSVARVYIREGKGDIKINHKNFDVYMQLEKLKTIALSPLALTHTLGKYDIYINVYGGGISGQAGAIRHGIARALFDLDEEYKMVLKSNEFLTRDSRKVERKKFGKKKARKSFQFSKR.

It belongs to the universal ribosomal protein uS9 family.

The polypeptide is Small ribosomal subunit protein uS9 (Borrelia recurrentis (strain A1)).